A 634-amino-acid polypeptide reads, in one-letter code: Sodium-dependent multivitamin transporter (634 aa).

Helical transmembrane passes span 23–43 (FSVV…VIGL), 65–85 (MGCL…VAIL), 100–120 (FLGC…IPVF), 142–162 (ICGT…ALYA), 175–195 (LWLS…LGGL), 207–227 (LIMF…VGGL), 255–275 (FWTL…VNQA), 295–315 (AVFP…LVMF), 350–370 (LPGL…SSAF), 403–423 (FAYG…GSVL), 427–447 (LSIF…GMFF), and 455–475 (AIVG…GSIV). N-linked (GlcNAc...) asparagine glycans are attached at residues N488 and N497. The helical transmembrane segment at 526–546 (LWYSAHNSTTVIAVGLIVSLL) threads the bilayer.

This sequence belongs to the sodium:solute symporter (SSF) (TC 2.A.21) family. In terms of assembly, interacts with PDZD11. As to expression, expressed in the jejunum (at protein level). Expressed in lung, skeletal muscle, heart, brain, kidney, intestine, liver, and placenta.

Its subcellular location is the cell membrane. It is found in the apical cell membrane. It catalyses the reaction biotin(out) + 2 Na(+)(out) = biotin(in) + 2 Na(+)(in). The catalysed reaction is (R)-pantothenate(out) + 2 Na(+)(out) = (R)-pantothenate(in) + 2 Na(+)(in). The enzyme catalyses (R)-lipoate(out) + 2 Na(+)(out) = (R)-lipoate(in) + 2 Na(+)(in). It carries out the reaction iodide(out) + 2 Na(+)(out) = iodide(in) + 2 Na(+)(in). In terms of biological role, sodium-dependent multivitamin transporter that mediates the electrogenic transport of pantothenate, biotin, lipoate and iodide. Functions as a Na(+)-coupled substrate symporter where the stoichiometry of Na(+):substrate is 2:1, creating an electrochemical Na(+) gradient used as driving force for substrate uptake. Required for biotin and pantothenate uptake in the intestine across the brush border membrane. Plays a role in the maintenance of intestinal mucosa integrity, by providing the gut mucosa with biotin. Contributes to the luminal uptake of biotin and pantothenate into the brain across the blood-brain barrier. The sequence is that of Sodium-dependent multivitamin transporter from Rattus norvegicus (Rat).